Reading from the N-terminus, the 74-residue chain is ATP synthase subunit c (74 aa).

2 helical membrane passes run 9 to 29 (IAIA…ASIF) and 51 to 71 (LIGA…AILL).

It belongs to the ATPase C chain family. In terms of assembly, F-type ATPases have 2 components, F(1) - the catalytic core - and F(0) - the membrane proton channel. F(1) has five subunits: alpha(3), beta(3), gamma(1), delta(1), epsilon(1). F(0) has three main subunits: a(1), b(2) and c(10-14). The alpha and beta chains form an alternating ring which encloses part of the gamma chain. F(1) is attached to F(0) by a central stalk formed by the gamma and epsilon chains, while a peripheral stalk is formed by the delta and b chains.

It localises to the cell inner membrane. Its function is as follows. F(1)F(0) ATP synthase produces ATP from ADP in the presence of a proton or sodium gradient. F-type ATPases consist of two structural domains, F(1) containing the extramembraneous catalytic core and F(0) containing the membrane proton channel, linked together by a central stalk and a peripheral stalk. During catalysis, ATP synthesis in the catalytic domain of F(1) is coupled via a rotary mechanism of the central stalk subunits to proton translocation. Key component of the F(0) channel; it plays a direct role in translocation across the membrane. A homomeric c-ring of between 10-14 subunits forms the central stalk rotor element with the F(1) delta and epsilon subunits. The sequence is that of ATP synthase subunit c from Orientia tsutsugamushi (strain Ikeda) (Rickettsia tsutsugamushi).